The chain runs to 290 residues: N-acetylneuraminate lyase (290 aa).

Residues Ser44 and Thr45 each contribute to the aceneuramate site. Tyr133 (proton donor) is an active-site residue. The active-site Schiff-base intermediate with substrate is Lys161. Thr163, Gly185, Asp187, Glu188, and Ser204 together coordinate aceneuramate.

It belongs to the DapA family. NanA subfamily. Homotetramer.

It localises to the cytoplasm. The enzyme catalyses aceneuramate = aldehydo-N-acetyl-D-mannosamine + pyruvate. The protein operates within amino-sugar metabolism; N-acetylneuraminate degradation; D-fructose 6-phosphate from N-acetylneuraminate: step 1/5. Its function is as follows. Catalyzes the reversible aldol cleavage of N-acetylneuraminic acid (sialic acid; Neu5Ac) to form pyruvate and N-acetylmannosamine (ManNAc) via a Schiff base intermediate. This is N-acetylneuraminate lyase from Fusobacterium nucleatum subsp. nucleatum (strain ATCC 25586 / DSM 15643 / BCRC 10681 / CIP 101130 / JCM 8532 / KCTC 2640 / LMG 13131 / VPI 4355).